We begin with the raw amino-acid sequence, 200 residues long: MDKKKHGTVQSADETIAAAGFAGEAAQGKGEDVQSVAAEERIRQLETELAAKEAEAAANWDKFVRERADLENYRRRTQKEKEELLKYGNESLLQDILPVVDSMERALGHADSESLSAVIEGIRMTHGMLLGTLKKFGVVAVEAERGTVFDPAYHQAMCQVEVSELPPNTVVEVFQRGYLLNERLLRPAMVSVATVPKDAA.

This sequence belongs to the GrpE family. As to quaternary structure, homodimer.

The protein resides in the cytoplasm. In terms of biological role, participates actively in the response to hyperosmotic and heat shock by preventing the aggregation of stress-denatured proteins, in association with DnaK and GrpE. It is the nucleotide exchange factor for DnaK and may function as a thermosensor. Unfolded proteins bind initially to DnaJ; upon interaction with the DnaJ-bound protein, DnaK hydrolyzes its bound ATP, resulting in the formation of a stable complex. GrpE releases ADP from DnaK; ATP binding to DnaK triggers the release of the substrate protein, thus completing the reaction cycle. Several rounds of ATP-dependent interactions between DnaJ, DnaK and GrpE are required for fully efficient folding. The polypeptide is Protein GrpE (Geobacter sulfurreducens (strain ATCC 51573 / DSM 12127 / PCA)).